Reading from the N-terminus, the 425-residue chain is Ribosomal protein uS12 methylthiotransferase RimO (425 aa).

The 114-residue stretch at 2 to 115 folds into the MTTase N-terminal domain; the sequence is KNFTVITLGC…IIDYIKQFSK (114 aa). The [4Fe-4S] cluster site is built by Cys11, Cys47, Cys78, Cys142, Cys146, and Cys149. The Radical SAM core domain occupies 128-357; it reads VEPPSYRYIK…MARQAVISLE (230 aa). One can recognise a TRAM domain in the interval 360 to 425; sequence RALIGKKYEA…YEYDVKGVIV (66 aa).

It belongs to the methylthiotransferase family. RimO subfamily. [4Fe-4S] cluster is required as a cofactor.

The protein localises to the cytoplasm. It catalyses the reaction L-aspartate(89)-[ribosomal protein uS12]-hydrogen + (sulfur carrier)-SH + AH2 + 2 S-adenosyl-L-methionine = 3-methylsulfanyl-L-aspartate(89)-[ribosomal protein uS12]-hydrogen + (sulfur carrier)-H + 5'-deoxyadenosine + L-methionine + A + S-adenosyl-L-homocysteine + 2 H(+). Catalyzes the methylthiolation of an aspartic acid residue of ribosomal protein uS12. The protein is Ribosomal protein uS12 methylthiotransferase RimO of Thermodesulfovibrio yellowstonii (strain ATCC 51303 / DSM 11347 / YP87).